The following is a 396-amino-acid chain: Phosphoglycerate kinase (396 aa).

Residues 21-23 (DLN), Arg-36, 59-62 (HFGR), Arg-118, and Arg-151 each bind substrate. Residues Lys-201, Glu-323, and 353 to 356 (GGDT) contribute to the ATP site.

The protein belongs to the phosphoglycerate kinase family. Monomer.

The protein localises to the cytoplasm. It carries out the reaction (2R)-3-phosphoglycerate + ATP = (2R)-3-phospho-glyceroyl phosphate + ADP. It functions in the pathway carbohydrate degradation; glycolysis; pyruvate from D-glyceraldehyde 3-phosphate: step 2/5. The protein is Phosphoglycerate kinase of Brucella melitensis biotype 1 (strain ATCC 23456 / CCUG 17765 / NCTC 10094 / 16M).